We begin with the raw amino-acid sequence, 257 residues long: Pimeloyl-[acyl-carrier protein] methyl ester esterase (257 aa).

The region spanning 15 to 241 is the AB hydrolase-1 domain; it reads HLVLLHGWGL…KAAHAPFVSH (227 aa). Residues W22, 82 to 83, and 143 to 147 each bind substrate; these read SL and FLALQ. S82 (nucleophile) is an active-site residue. Active-site residues include D207 and H235. Residue H235 participates in substrate binding.

This sequence belongs to the AB hydrolase superfamily. Carboxylesterase BioH family. In terms of assembly, monomer.

It is found in the cytoplasm. The enzyme catalyses 6-carboxyhexanoyl-[ACP] methyl ester + H2O = 6-carboxyhexanoyl-[ACP] + methanol + H(+). Its pathway is cofactor biosynthesis; biotin biosynthesis. The physiological role of BioH is to remove the methyl group introduced by BioC when the pimeloyl moiety is complete. It allows to synthesize pimeloyl-ACP via the fatty acid synthetic pathway through the hydrolysis of the ester bonds of pimeloyl-ACP esters. The protein is Pimeloyl-[acyl-carrier protein] methyl ester esterase of Klebsiella pneumoniae (strain 342).